A 203-amino-acid chain; its full sequence is HTH-type transcriptional regulator CymR (203 aa).

In terms of domain architecture, HTH tetR-type spans 13–73 (METQGKLIAA…ATFEWLYEQI (61 aa)). Positions 36 to 55 (RIADVPGAAGVSRGAQSHHF) form a DNA-binding region, H-T-H motif.

Its function is as follows. Involved in the repression of the cym and cmt operons which are responsible of the p-cymene degradation. The chain is HTH-type transcriptional regulator CymR from Pseudomonas putida (Arthrobacter siderocapsulatus).